The following is a 458-amino-acid chain: MNTSYSQSNLRHNQILIWLCILSFFSVLNEMVLNVSLPDIANDFNKPPASTNWVNTAFMLTFSIGTAVYGKLSDQLGIKRLLLFGIIINCFGSVIGFVGHSFFSLLIMARFIQGAGAAAFPALVMVVVARYIPKENRGKAFGLIGSIVAMGEGVGPAIGGMIAHYIHWSYLLLIPMITIITVPFLMKLLKKEVRIKGHFDIKGIILMSVGIVFFMLFTTSYSISFLIVSVLSFLIFVKHIRKVTDPFVDPGLGKNIPFMIGVLCGGIIFGTVAGFVSMVPYMMKDVHQLSTAEIGSVIIFPGTMSVIIFGYIGGILVDRRGPLYVLNIGVTFLSVSFLTASFLLETTSWFMTIIIVFVLGGLSFTKTVISTIVSSSLKQQEAGAGMSLLNFTSFLSEGTGIAIVGGLLSIPLLDQRLLPMEVDQSTYLYSNLLLLFSGIIVISWLVTLNVYKHSQRDF.

The next 12 helical transmembrane spans lie at 12 to 33 (HNQI…EMVL), 81 to 100 (LLLF…FVGH), 111 to 129 (FIQG…VVVA), 140 to 162 (AFGL…GGMI), 165 to 185 (YIHW…VPFL), 201 to 221 (IKGI…TTSY), 223 to 240 (ISFL…VKHI), 256 to 276 (IPFM…AGFV), 297 to 317 (VIIF…GILV), 324 to 344 (YVLN…SFLL), 346 to 365 (TTSW…LSFT), and 432 to 451 (LLLL…LNVY).

The protein belongs to the major facilitator superfamily. TCR/Tet family.

It localises to the cell membrane. In terms of biological role, resistance to tetracycline by an active tetracycline efflux. This is an energy-dependent process that decreases the accumulation of the antibiotic in whole cells. This protein functions as a metal-tetracycline/H(+) antiporter. This is Tetracycline resistance protein (tet) from Bacillus cereus.